A 227-amino-acid chain; its full sequence is Fibrillarin-like rRNA/tRNA 2'-O-methyltransferase (227 aa).

S-adenosyl-L-methionine is bound by residues 86 to 87 (TT), 105 to 106 (EF), 130 to 131 (DA), and 150 to 153 (DVAQ).

This sequence belongs to the methyltransferase superfamily. Fibrillarin family. As to quaternary structure, interacts with nop5. Component of box C/D small ribonucleoprotein (sRNP) particles that contain rpl7ae, FlpA and nop5, plus a guide RNA.

Involved in pre-rRNA and tRNA processing. Utilizes the methyl donor S-adenosyl-L-methionine to catalyze the site-specific 2'-hydroxyl methylation of ribose moieties in rRNA and tRNA. Site specificity is provided by a guide RNA that base pairs with the substrate. Methylation occurs at a characteristic distance from the sequence involved in base pairing with the guide RNA. The protein is Fibrillarin-like rRNA/tRNA 2'-O-methyltransferase of Pyrococcus abyssi (strain GE5 / Orsay).